We begin with the raw amino-acid sequence, 362 residues long: Phosphoserine aminotransferase (362 aa).

R41 serves as a coordination point for L-glutamate. Residues 75–76, F101, T152, D173, and Q196 contribute to the pyridoxal 5'-phosphate site; that span reads GS. K197 bears the N6-(pyridoxal phosphate)lysine mark. Residue 239–240 coordinates pyridoxal 5'-phosphate; the sequence is NT.

Belongs to the class-V pyridoxal-phosphate-dependent aminotransferase family. SerC subfamily. Homodimer. It depends on pyridoxal 5'-phosphate as a cofactor.

The protein localises to the cytoplasm. The catalysed reaction is O-phospho-L-serine + 2-oxoglutarate = 3-phosphooxypyruvate + L-glutamate. It catalyses the reaction 4-(phosphooxy)-L-threonine + 2-oxoglutarate = (R)-3-hydroxy-2-oxo-4-phosphooxybutanoate + L-glutamate. It functions in the pathway amino-acid biosynthesis; L-serine biosynthesis; L-serine from 3-phospho-D-glycerate: step 2/3. Its function is as follows. Catalyzes the reversible conversion of 3-phosphohydroxypyruvate to phosphoserine and of 3-hydroxy-2-oxo-4-phosphonooxybutanoate to phosphohydroxythreonine. This chain is Phosphoserine aminotransferase, found in Leuconostoc mesenteroides subsp. mesenteroides (strain ATCC 8293 / DSM 20343 / BCRC 11652 / CCM 1803 / JCM 6124 / NCDO 523 / NBRC 100496 / NCIMB 8023 / NCTC 12954 / NRRL B-1118 / 37Y).